The primary structure comprises 565 residues: Proline--tRNA ligase (565 aa).

This sequence belongs to the class-II aminoacyl-tRNA synthetase family. ProS type 1 subfamily. In terms of assembly, homodimer.

The protein resides in the cytoplasm. The enzyme catalyses tRNA(Pro) + L-proline + ATP = L-prolyl-tRNA(Pro) + AMP + diphosphate. In terms of biological role, catalyzes the attachment of proline to tRNA(Pro) in a two-step reaction: proline is first activated by ATP to form Pro-AMP and then transferred to the acceptor end of tRNA(Pro). As ProRS can inadvertently accommodate and process non-cognate amino acids such as alanine and cysteine, to avoid such errors it has two additional distinct editing activities against alanine. One activity is designated as 'pretransfer' editing and involves the tRNA(Pro)-independent hydrolysis of activated Ala-AMP. The other activity is designated 'posttransfer' editing and involves deacylation of mischarged Ala-tRNA(Pro). The misacylated Cys-tRNA(Pro) is not edited by ProRS. This chain is Proline--tRNA ligase, found in Francisella philomiragia subsp. philomiragia (strain ATCC 25017 / CCUG 19701 / FSC 153 / O#319-036).